Here is a 268-residue protein sequence, read N- to C-terminus: 4-pyridoxolactonase (268 aa).

Zn(2+) contacts are provided by H96, H98, D100, H101, H185, D207, and H252. D100 acts as the Proton donor/acceptor in catalysis.

Belongs to the metallo-beta-lactamase superfamily. In terms of assembly, homodimer. Zn(2+) serves as cofactor.

The enzyme catalyses 4-pyridoxolactone + H2O = 4-pyridoxate + H(+). The protein operates within cofactor degradation; B6 vitamer degradation; 4-pyridoxate from pyridoxal: step 2/2. With respect to regulation, inhibited by Hg(2+). Functionally, involved in the degradation of pyridoxine or pyridoxamine (free, phosphate-unbound, forms of vitamin B6). Hydrolyzes 4-pyridoxolactone to 4-pyridoxic acid. Has lower activity toward N-hexanoyl-D,L-homoserine lactone, but is not active toward 5-pyridoxolactone and gamma-butyrolactone. This is 4-pyridoxolactonase from Mesorhizobium japonicum (strain LMG 29417 / CECT 9101 / MAFF 303099) (Mesorhizobium loti (strain MAFF 303099)).